The following is a 316-amino-acid chain: uncharacterized protein (316 aa).

2 disordered regions span residues 82 to 105 and 238 to 257; these read AMAAASTGAGSSSGTNVGGSSGGN and ASVSVQTTQQSRQQSTDTQE. Composition is skewed to low complexity over residues 84 to 96 and 239 to 255; these read AAASTGAGSSSGT and SVSVQTTQQSRQQSTDT.

It belongs to the MG307/MG309/MG338 family.

This is an uncharacterized protein from Mycoplasma pneumoniae (strain ATCC 29342 / M129 / Subtype 1) (Mycoplasmoides pneumoniae).